Here is a 217-residue protein sequence, read N- to C-terminus: Large ribosomal subunit protein uL1 (217 aa).

Belongs to the universal ribosomal protein uL1 family. As to quaternary structure, part of the 50S ribosomal subunit.

Binds directly to 23S rRNA. Probably involved in E site tRNA release. Functionally, protein L1 is also a translational repressor protein, it controls the translation of its operon by binding to its mRNA. The sequence is that of Large ribosomal subunit protein uL1 from Hyperthermus butylicus (strain DSM 5456 / JCM 9403 / PLM1-5).